Consider the following 276-residue polypeptide: Nuclear egress protein 2 (276 aa).

Over 1–245 the chain is Perinuclear space; sequence MANVLKEKMY…FWRLSERHCR (245 aa). A helical membrane pass occupies residues 246–264; sequence FALVGICFLLALYFCYVLL. Residues 265 to 276 are Nuclear-facing; it reads KKTPTPASGSVV.

The protein belongs to the herpesviridae NEC2 protein family. As to quaternary structure, forms a heterohexameric complex with NEC1. Phosphorylated.

The protein localises to the host nucleus inner membrane. Plays an essential role in virion nuclear egress, the first step of virion release from infected cell. Within the host nucleus, NEC1 interacts with the newly formed capsid through the vertexes and directs it to the inner nuclear membrane by associating with NEC2. Induces the budding of the capsid at the inner nuclear membrane as well as its envelopment into the perinuclear space. There, the NEC1/NEC2 complex promotes the fusion of the enveloped capsid with the outer nuclear membrane and the subsequent release of the viral capsid into the cytoplasm where it will reach the secondary budding sites in the host Golgi or trans-Golgi network. This Homo sapiens (Human) protein is Nuclear egress protein 2.